The chain runs to 985 residues: Probable beta-galactosidase C (985 aa).

Residues 1–23 (MRILSLLFLLLLGFLAGNRVVSA) form the signal peptide. Residues Y82, N127, A128, E129, and N187 each coordinate substrate. E188 serves as the catalytic Proton donor. A substrate-binding site is contributed by Y251. Residues C257 and C304 are joined by a disulfide bond. N-linked (GlcNAc...) asparagine glycosylation is present at N276. The Nucleophile role is filled by E287. Residue Y353 coordinates substrate. N391, N434, N517, N602, N677, N715, N720, and N759 each carry an N-linked (GlcNAc...) asparagine glycan.

Belongs to the glycosyl hydrolase 35 family.

It localises to the secreted. It catalyses the reaction Hydrolysis of terminal non-reducing beta-D-galactose residues in beta-D-galactosides.. Its function is as follows. Cleaves beta-linked terminal galactosyl residues from gangliosides, glycoproteins, and glycosaminoglycans. The chain is Probable beta-galactosidase C (lacC) from Aspergillus clavatus (strain ATCC 1007 / CBS 513.65 / DSM 816 / NCTC 3887 / NRRL 1 / QM 1276 / 107).